An 842-amino-acid chain; its full sequence is Taste receptor type 1 member 1 (842 aa).

An N-terminal signal peptide occupies residues 1–19 (MLFWAAHLLLSLQLAVAYC). At 20–568 (WAFSCQRTES…EFLGWHEPIS (549 aa)) the chain is on the extracellular side. N-linked (GlcNAc...) asparagine glycans are attached at residues N88, N89, N96, N136, N292, N480, and N530. Residues 569–589 (LVLLAANTLLLLLLIGTAGLF) traverse the membrane as a helical segment. The Cytoplasmic portion of the chain corresponds to 590–604 (AWRLHTPVVRSAGGR). The helical transmembrane segment at 605-625 (LCFLMLGSLVAGSCSLYSFFG) threads the bilayer. At 626–640 (KPTVPACLLRQPLFS) the chain is on the extracellular side. The chain crosses the membrane as a helical span at residues 641-661 (LGFAIFLSCLTIRSFQLVIIF). Residues 662–681 (KFSTKVPTFYHTWAQNHGAG) lie on the Cytoplasmic side of the membrane. A helical membrane pass occupies residues 682–702 (IFVIVSSTVHLFLCLTWLAMW). Topologically, residues 703 to 725 (TPRPTREYQRFPHLVILECTEVN) are extracellular. A helical transmembrane segment spans residues 726-746 (SVGFLVAFAHNILLSISTFVC). The Cytoplasmic portion of the chain corresponds to 747–762 (SYLGKELPENYNEAKC). Residues 763-783 (VTFSLLLHFVSWIAFFTMSSI) traverse the membrane as a helical segment. Residues 784 to 789 (YQGSYL) lie on the Extracellular side of the membrane. Residues 790 to 810 (PAVNVLAGLATLSGGFSGYFL) form a helical membrane-spanning segment. Residues 811–842 (PKCYVILCRPELNNTEHFQASIQDYTRRCGTT) lie on the Cytoplasmic side of the membrane.

The protein belongs to the G-protein coupled receptor 3 family. TAS1R subfamily. Forms heterodimers with TAS1R3. As to expression, expressed strongly only in fungiform papillae.

The protein localises to the cell membrane. In terms of biological role, putative taste receptor. TAS1R1/TAS1R3 responds to the umami taste stimulus (the taste of monosodium glutamate) and also to most of the 20 standard L-amino acids, but not to their D-enantiomers or other compounds. Sequence differences within and between species can significantly influence the selectivity and specificity of taste responses. This chain is Taste receptor type 1 member 1 (Tas1r1), found in Mus musculus (Mouse).